The following is a 481-amino-acid chain: Aspartyl/glutamyl-tRNA(Asn/Gln) amidotransferase subunit B (481 aa).

Belongs to the GatB/GatE family. GatB subfamily. As to quaternary structure, heterotrimer of A, B and C subunits.

It carries out the reaction L-glutamyl-tRNA(Gln) + L-glutamine + ATP + H2O = L-glutaminyl-tRNA(Gln) + L-glutamate + ADP + phosphate + H(+). The catalysed reaction is L-aspartyl-tRNA(Asn) + L-glutamine + ATP + H2O = L-asparaginyl-tRNA(Asn) + L-glutamate + ADP + phosphate + 2 H(+). Functionally, allows the formation of correctly charged Asn-tRNA(Asn) or Gln-tRNA(Gln) through the transamidation of misacylated Asp-tRNA(Asn) or Glu-tRNA(Gln) in organisms which lack either or both of asparaginyl-tRNA or glutaminyl-tRNA synthetases. The reaction takes place in the presence of glutamine and ATP through an activated phospho-Asp-tRNA(Asn) or phospho-Glu-tRNA(Gln). This Pseudomonas savastanoi pv. phaseolicola (strain 1448A / Race 6) (Pseudomonas syringae pv. phaseolicola (strain 1448A / Race 6)) protein is Aspartyl/glutamyl-tRNA(Asn/Gln) amidotransferase subunit B.